Reading from the N-terminus, the 313-residue chain is Protein YABBY 3 (313 aa).

A C4-type zinc finger spans residues 65–92 (CHYCDTVLVVSVPSSSLFETVTVRCGHC). Disordered regions lie at residues 107–149 (TTAA…SLLD) and 180–221 (NNSP…KRQR). The segment covering 112–128 (APPPPPPPPPPPPPPAA) has biased composition (pro residues).

Belongs to the YABBY family. As to expression, expressed in shoot apex and young inflorescences.

It is found in the nucleus. This Oryza sativa subsp. japonica (Rice) protein is Protein YABBY 3 (YAB3).